The primary structure comprises 508 residues: T-complex protein 1 subunit beta (508 aa).

The protein belongs to the TCP-1 chaperonin family. In terms of assembly, component of the T-complex protein 1 (TCP1) complex.

The protein resides in the cytoplasm. Molecular chaperone; assists the folding of proteins upon ATP hydrolysis. The protein is T-complex protein 1 subunit beta (CCT2) of Encephalitozoon cuniculi (strain GB-M1) (Microsporidian parasite).